The sequence spans 1021 residues: Sodium/potassium-transporting ATPase subunit alpha-1 (1021 aa).

Residues 1–5 (MGKGG) constitute a propeptide that is removed on maturation. Over residues 1-11 (MGKGGGRDKYE) the composition is skewed to basic and acidic residues. Residues 1 to 37 (MGKGGGRDKYEPAAISEHGNKKKAKKERDMDELKKEV) are disordered. The Cytoplasmic portion of the chain corresponds to 6 to 85 (GRDKYEPAAI…NALTPPPTTP (80 aa)). N6-acetyllysine is present on lysine 9. Tyrosine 10 carries the phosphotyrosine modification. Position 16 is a phosphoserine; by PKC (serine 16). Residue lysine 21 is modified to N6-acetyllysine. Positions 26–37 (KERDMDELKKEV) are enriched in basic and acidic residues. Phosphoserine is present on residues serine 38 and serine 45. Positions 80 to 82 (PPP) are phosphoinositide-3 kinase binding. The chain crosses the membrane as a helical span at residues 86 to 106 (EWVKFCRQLFGGFSMLLWIGA). Residues 107–129 (ILCFLAYGIQAATEEEPQNDNLY) are Extracellular-facing. Residues 130-150 (LGVVLSAVVIITGCFSYYQEA) traverse the membrane as a helical segment. Residues 151–286 (KSSKIMESFK…GGQTPIAAEI (136 aa)) lie on the Cytoplasmic side of the membrane. Positions 214–233 (SSLTGESEPQTRSPDFTNEN) are disordered. Serine 226 carries the post-translational modification Phosphoserine. Residue tyrosine 258 is modified to Phosphotyrosine. The helical transmembrane segment at 287–306 (EHFIHIITGVAVFLGVTFFI) threads the bilayer. The Extracellular segment spans residues 307 to 318 (LSLILEYTWLEA). The helical transmembrane segment at 319–336 (VIFLIGIIVANVPEGLLA) threads the bilayer. Residues 337–770 (TVTVCLTLTA…EEGRLIFDNL (434 aa)) lie on the Cytoplasmic side of the membrane. Aspartate 374 (4-aspartylphosphate intermediate) is an active-site residue. 2 positions are modified to phosphoserine: serine 450 and serine 482. Lysine 485 contacts ATP. Position 540 is a phosphotyrosine (tyrosine 540). Residues 594–715 (RAAVPDAVGK…QGAIVAVTGD (122 aa)) are mediates interaction with SCN7A. N6-succinyllysine is present on lysine 659. Serine 666 bears the Phosphoserine mark. 2 residues coordinate Mg(2+): aspartate 715 and aspartate 719. The chain crosses the membrane as a helical span at residues 771–790 (KKSIAYTLTSNIPEITPFLI). Over 791 to 800 (FIIANIPLPL) the chain is Extracellular. Residues 801-821 (GTVTILCIDLGTDMVPAISLA) traverse the membrane as a helical segment. Over 822-841 (YEQAESDIMKRQPRNPQTDK) the chain is Cytoplasmic. Residues 842 to 864 (LVNERLISMAYGQIGMIQALGGF) traverse the membrane as a helical segment. Topologically, residues 865 to 916 (FTYFVILAENGFLPIHLLGLRVDWDDRWVNDVEDSYGQQWTYEQRKIVEFTC) are extracellular. A helical transmembrane segment spans residues 917-936 (HTAFFVSIVVVQWADLVICK). Topologically, residues 937 to 949 (TRRNSVFQQGMKN) are cytoplasmic. Serine 941 carries the post-translational modification Phosphoserine; by PKA. Residues 950-968 (KILIFGLFEETALAAFLSY) form a helical membrane-spanning segment. The Extracellular segment spans residues 969–983 (CPGMGVALRMYPLKP). The chain crosses the membrane as a helical span at residues 984–1004 (TWWFCAFPYSLLIFVYDEVRK). Topologically, residues 1005–1021 (LIIRRRPGGWVEKETYY) are cytoplasmic.

Belongs to the cation transport ATPase (P-type) (TC 3.A.3) family. Type IIC subfamily. The sodium/potassium-transporting ATPase is composed of a catalytic alpha subunit, an auxiliary non-catalytic beta subunit and an additional regulatory subunit. Interacts with regulatory subunit FXYD1. Interacts with regulatory subunit FXYD3. Interacts with SIK1. Interacts with SLC35G1 and STIM1. Interacts with CLN3; this interaction regulates the sodium/potassium-transporting ATPase complex localization at the plasma membrane. Interacts with SCN7A; activates ATP1A1 P-type sodium:potassium-exchanging transporter activity which indirectly signals to nearby neurons to regulate sodium homeostasis. Post-translationally, phosphorylation on Tyr-10 modulates pumping activity. Phosphorylation of Ser-941 by PKA modulates the response of ATP1A1 to PKC. Dephosphorylation by protein phosphatase 2A (PP2A) following increases in intracellular sodium, leading to increase catalytic activity.

Its subcellular location is the cell membrane. It localises to the basolateral cell membrane. It is found in the sarcolemma. The protein resides in the cell projection. The protein localises to the axon. Its subcellular location is the melanosome. The catalysed reaction is K(+)(out) + Na(+)(in) + ATP + H2O = K(+)(in) + Na(+)(out) + ADP + phosphate + H(+). In terms of biological role, this is the catalytic component of the active enzyme, which catalyzes the hydrolysis of ATP coupled with the exchange of sodium and potassium ions across the plasma membrane. This action creates the electrochemical gradient of sodium and potassium ions, providing the energy for active transport of various nutrients. Could also be part of an osmosensory signaling pathway that senses body-fluid sodium levels and controls salt intake behavior as well as voluntary water intake to regulate sodium homeostasis. The protein is Sodium/potassium-transporting ATPase subunit alpha-1 (ATP1A1) of Equus caballus (Horse).